The chain runs to 319 residues: Ribosomal large subunit pseudouridine synthase C (319 aa).

The S4 RNA-binding domain occupies 20 to 83; it reads QRIDNFLRTQ…AEREEEAVSP (64 aa). Residue Asp144 is part of the active site.

The protein belongs to the pseudouridine synthase RluA family.

It carries out the reaction uridine(955/2504/2580) in 23S rRNA = pseudouridine(955/2504/2580) in 23S rRNA. Responsible for synthesis of pseudouridine from uracil at positions 955, 2504 and 2580 in 23S ribosomal RNA. This Escherichia coli (strain K12) protein is Ribosomal large subunit pseudouridine synthase C.